Consider the following 358-residue polypeptide: Trace amine-associated receptor 7a (358 aa).

Topologically, residues 1-47 (MDKLVDNFLSGQSRTMSEDLLSASSPQLCYENLNGSCIRSPYSPGPR) are extracellular. A glycan (N-linked (GlcNAc...) asparagine) is linked at N34. Intrachain disulfides connect C37-C201 and C120-C205. A helical membrane pass occupies residues 48 to 68 (LILYAVFGFGAVLAVCGNLLV). Topologically, residues 69 to 83 (MTSILHFRQLHSPAN) are cytoplasmic. Residues 84-104 (FLVASLACADFLVGLTVMPFS) form a helical membrane-spanning segment. Topologically, residues 105–121 (TVRSVEGCWYFGDTYCK) are extracellular. Residues 122 to 143 (FHSCFEGSFCYSSIFHLCFISV) form a helical membrane-spanning segment. Residues 144–166 (DRYIAVSDPLIYPTRFTASVSGK) lie on the Cytoplasmic side of the membrane. The helical transmembrane segment at 167–187 (CITFSWLLSIIYSFSLLYTGA) threads the bilayer. Residues 188-212 (NEAGLEDLVSALTCVGGCQIAVNQS) are Extracellular-facing. Residue N210 is glycosylated (N-linked (GlcNAc...) asparagine). Residues 213–233 (WVFINFLLFLVPTLVMMTVYS) form a helical membrane-spanning segment. Residues 234–274 (KIFLIAKQQAQNIEKMSKQTTRASESYKDRVAKRERKAAKT) are Cytoplasmic-facing. The helical transmembrane segment at 275–295 (LGIAVAAFLLSWLPYFIDSII) threads the bilayer. Residues 296-309 (DAFLGFITPTYVYE) are Extracellular-facing. The chain crosses the membrane as a helical span at residues 310 to 333 (ILVWIAYYNSAMNPLIYAFFYPWF). The Cytoplasmic portion of the chain corresponds to 334 to 358 (RKAIKLIVTGKILRQNSSVTNLFPE).

It belongs to the G-protein coupled receptor 1 family.

It localises to the cell membrane. Its function is as follows. Olfactory receptor specific for N,N-dimethylalkylamines trace amines. Trace amine compounds are enriched in animal body fluids and act on trace amine-associated receptors (TAARs) to elicit both intraspecific and interspecific innate behaviors. Ligand-binding causes a conformation change that triggers signaling via G(s)-class of G alpha proteins (GNAL or GNAS). This is Trace amine-associated receptor 7a from Rattus norvegicus (Rat).